The following is a 143-amino-acid chain: Large ribosomal subunit protein uL11 (143 aa).

It belongs to the universal ribosomal protein uL11 family. As to quaternary structure, part of the ribosomal stalk of the 50S ribosomal subunit. Interacts with L10 and the large rRNA to form the base of the stalk. L10 forms an elongated spine to which L12 dimers bind in a sequential fashion forming a multimeric L10(L12)X complex. Post-translationally, one or more lysine residues are methylated.

In terms of biological role, forms part of the ribosomal stalk which helps the ribosome interact with GTP-bound translation factors. This Burkholderia ambifaria (strain MC40-6) protein is Large ribosomal subunit protein uL11.